The following is a 214-amino-acid chain: Protein GrpE (214 aa).

The segment covering 1 to 13 (MKHTSEPTSQPDT) has biased composition (polar residues). Positions 1–61 (MKHTSEPTSQ…AAVAEATIEP (61 aa)) are disordered. The span at 14-57 (QAAESAQSSAAAAGQAASAYSSQAQRASADAQAIAGDEAAVAEA) shows a compositional bias: low complexity.

It belongs to the GrpE family. As to quaternary structure, homodimer.

The protein localises to the cytoplasm. Its function is as follows. Participates actively in the response to hyperosmotic and heat shock by preventing the aggregation of stress-denatured proteins, in association with DnaK and GrpE. It is the nucleotide exchange factor for DnaK and may function as a thermosensor. Unfolded proteins bind initially to DnaJ; upon interaction with the DnaJ-bound protein, DnaK hydrolyzes its bound ATP, resulting in the formation of a stable complex. GrpE releases ADP from DnaK; ATP binding to DnaK triggers the release of the substrate protein, thus completing the reaction cycle. Several rounds of ATP-dependent interactions between DnaJ, DnaK and GrpE are required for fully efficient folding. The sequence is that of Protein GrpE from Ralstonia nicotianae (strain ATCC BAA-1114 / GMI1000) (Ralstonia solanacearum).